The following is a 195-amino-acid chain: Holliday junction branch migration complex subunit RuvA (195 aa).

The domain I stretch occupies residues 1 to 61; that stretch reads MYEYFEGIIS…DTGITLYGFQ (61 aa). The interval 62–140 is domain II; the sequence is DQDDKGLFLK…DYVARLDKPE (79 aa). Residues 141–146 form a flexible linker region; it reads NGEEIS. Residues 146–195 are domain III; that stretch reads SPALNDALLALIALGYTQKEVDRITPKLVEIEADTADQYIKKGLALLLKK.

It belongs to the RuvA family. As to quaternary structure, homotetramer. Forms an RuvA(8)-RuvB(12)-Holliday junction (HJ) complex. HJ DNA is sandwiched between 2 RuvA tetramers; dsDNA enters through RuvA and exits via RuvB. An RuvB hexamer assembles on each DNA strand where it exits the tetramer. Each RuvB hexamer is contacted by two RuvA subunits (via domain III) on 2 adjacent RuvB subunits; this complex drives branch migration. In the full resolvosome a probable DNA-RuvA(4)-RuvB(12)-RuvC(2) complex forms which resolves the HJ.

The protein resides in the cytoplasm. Its function is as follows. The RuvA-RuvB-RuvC complex processes Holliday junction (HJ) DNA during genetic recombination and DNA repair, while the RuvA-RuvB complex plays an important role in the rescue of blocked DNA replication forks via replication fork reversal (RFR). RuvA specifically binds to HJ cruciform DNA, conferring on it an open structure. The RuvB hexamer acts as an ATP-dependent pump, pulling dsDNA into and through the RuvAB complex. HJ branch migration allows RuvC to scan DNA until it finds its consensus sequence, where it cleaves and resolves the cruciform DNA. The chain is Holliday junction branch migration complex subunit RuvA from Lactobacillus acidophilus (strain ATCC 700396 / NCK56 / N2 / NCFM).